A 350-amino-acid chain; its full sequence is Protein RecA (350 aa).

Residue 68–75 participates in ATP binding; it reads GPESSGKT.

It belongs to the RecA family.

The protein resides in the cytoplasm. Its function is as follows. Can catalyze the hydrolysis of ATP in the presence of single-stranded DNA, the ATP-dependent uptake of single-stranded DNA by duplex DNA, and the ATP-dependent hybridization of homologous single-stranded DNAs. It interacts with LexA causing its activation and leading to its autocatalytic cleavage. The polypeptide is Protein RecA (Mycolicibacterium vanbaalenii (strain DSM 7251 / JCM 13017 / BCRC 16820 / KCTC 9966 / NRRL B-24157 / PYR-1) (Mycobacterium vanbaalenii)).